The primary structure comprises 214 residues: Ribonuclease HII (214 aa).

One can recognise an RNase H type-2 domain in the interval 26–214; sequence EIVCGVDEAG…PVREAFDLIR (189 aa). A divalent metal cation contacts are provided by aspartate 32, glutamate 33, and aspartate 124.

It belongs to the RNase HII family. The cofactor is Mn(2+). Requires Mg(2+) as cofactor.

It is found in the cytoplasm. The enzyme catalyses Endonucleolytic cleavage to 5'-phosphomonoester.. Functionally, endonuclease that specifically degrades the RNA of RNA-DNA hybrids. This chain is Ribonuclease HII, found in Burkholderia thailandensis (strain ATCC 700388 / DSM 13276 / CCUG 48851 / CIP 106301 / E264).